The sequence spans 311 residues: Beta-ketoacyl-[acyl-carrier-protein] synthase III (311 aa).

Active-site residues include C114 and H238. Residues 239–243 (QANIR) form an ACP-binding region. The active site involves N268.

This sequence belongs to the thiolase-like superfamily. FabH family. As to quaternary structure, homodimer.

The protein localises to the cytoplasm. It catalyses the reaction malonyl-[ACP] + acetyl-CoA + H(+) = 3-oxobutanoyl-[ACP] + CO2 + CoA. The protein operates within lipid metabolism; fatty acid biosynthesis. Its function is as follows. Catalyzes the condensation reaction of fatty acid synthesis by the addition to an acyl acceptor of two carbons from malonyl-ACP. Catalyzes the first condensation reaction which initiates fatty acid synthesis and may therefore play a role in governing the total rate of fatty acid production. Possesses both acetoacetyl-ACP synthase and acetyl transacylase activities. Its substrate specificity determines the biosynthesis of branched-chain and/or straight-chain of fatty acids. The protein is Beta-ketoacyl-[acyl-carrier-protein] synthase III of Neorickettsia sennetsu (strain ATCC VR-367 / Miyayama) (Ehrlichia sennetsu).